A 370-amino-acid polypeptide reads, in one-letter code: Doublesex- and mab-3-related transcription factor C2 (370 aa).

Residues 1–38 (MDPSETAALHHCSADSSPADEARVPQSTELIPRRPVSR) are disordered. A DNA-binding region (DM) is located at residues 42 to 89 (CARCRNHGVTAHLKGHKRLCLFQACECHKCVLILERRRVMAAQVALRR). The interval 334 to 356 (APPGGRGFQPVGPPLRPSPGSSV) is disordered.

The protein belongs to the DMRT family. Expressed in testis. Highly expressed in ovary.

The protein localises to the nucleus. Its function is as follows. May be involved in sexual development. In Mus musculus (Mouse), this protein is Doublesex- and mab-3-related transcription factor C2 (Dmrtc2).